The chain runs to 648 residues: Mitotic interactor and substrate of PLK1 (648 aa).

Phosphoserine; by CDK1 is present on Ser-77. Phosphothreonine occurs at positions 149 and 190. Ser-220 is modified (phosphoserine). Disordered regions lie at residues 242–383 (VNDP…PEAR) and 430–460 (KATESPRHVSESSGRSLSSKQEWSKPPGKAT). Phosphoserine; by CDK1 is present on Ser-253. A compositionally biased stretch (basic and acidic residues) spans 255–281 (ETPKETPIEREIRLAQEREAELREQRG). Thr-256 is modified (phosphothreonine; by CDK1). Ser-318 bears the Phosphoserine mark. A compositionally biased stretch (basic and acidic residues) spans 325–339 (MVQETQREEDHRREG). Residue Thr-347 is modified to Phosphothreonine; by CDK1. Residues 349 to 367 (DWPSQDPQPGLQRSLSSDC) show a composition bias toward polar residues. Phosphoserine occurs at positions 352 and 364. Ser-365 and Ser-439 each carry phosphoserine; by PLK1. Positions 440–450 (ESSGRSLSSKQ) are enriched in polar residues. Ser-507 and Ser-509 each carry phosphoserine. Residues 511–534 (DLLEREMESVLRREREVAEERRNA) are a coiled coil. The disordered stretch occupies residues 539 to 568 (VFSPVPAEDESHEQDSRSSSRASGITGSYS). Ser-541 bears the Phosphoserine; by CDK1 mark. Ser-554 carries the phosphoserine; by PLK1 modification. Polar residues predominate over residues 557–568 (SSRASGITGSYS). Ser-644 is modified (phosphoserine).

Belongs to the MISP family. Associates with F-actin. Interacts with DCTN1; this interaction regulates DCTN1 distribution at the cell cortex. Interacts with PTK2/FAK and MAPRE1. In terms of processing, phosphorylated by CDK1 and PLK1. CDK1 is the priming kinase for PLK1 phosphorylation. Phosphorylation by PLK1 is required for proper spindle orientation at metaphase.

Its subcellular location is the cell junction. It is found in the focal adhesion. It localises to the cytoplasm. The protein resides in the cytoskeleton. The protein localises to the cell cortex. Plays a role in mitotic spindle orientation and mitotic progression. Regulates the distribution of dynactin at the cell cortex in a PLK1-dependent manner, thus stabilizing cortical and astral microtubule attachments required for proper mitotic spindle positioning. May link microtubules to the actin cytoskeleton and focal adhesions. May be required for directed cell migration and centrosome orientation. May also be necessary for proper stacking of the Golgi apparatus. The polypeptide is Mitotic interactor and substrate of PLK1 (Mus musculus (Mouse)).